The sequence spans 541 residues: MAKELKFSEDARSKMLAGVDKLANTVKTTLGPKGRNVVLEQSYGNPTITNDGVTIAKAIELEDHFENMGAKLVSEVASKTNDIAGDGTTTATVLTQAIVNEGMKNVTAGANPVGIRRGIEKATGAAVDALHKMSHDVKTKDDIAQIASISSASKETGKLIADAMEKVGNDGVITIEESRGVDTSLDVVEGMQFDRGYMSQYMVTDNDKMEANLDNPYILITDKKIANIQDILPLLQSVVEQSRSLLIIADDITGEALPTLVLNKMRGTFNVVAVKAPGFGDRRKAQLQDIAVLTGGTVITDDLGLNLKDTTIDQLGQAQKVNVTKDDTTVVEGAGSKDQIAARVAEIKGQIEDTTSDFDRDKLKERLAKLSGGVAVVRVGAATETELKERKYRIEDALNATRAAVEEGFVAGGGTALINVIGDVAKLEAEGDEKTGINIVLRALEEPVRQIAQNAGVEGSVVVEHLKGEKPGVGYNAADNKYEDMVAAGITDPTKVTRSALQNAASVSALLLTTEAVVAEKPEDNPAPAAPAANPGMGGMM.

ATP-binding positions include 29–32 (TLGP), 86–90 (DGTTT), G413, 476–478 (NAA), and D492. Residues 521–541 (KPEDNPAPAAPAANPGMGGMM) are disordered. Residues 526-535 (PAPAAPAANP) are compositionally biased toward low complexity.

It belongs to the chaperonin (HSP60) family. As to quaternary structure, forms a cylinder of 14 subunits composed of two heptameric rings stacked back-to-back. Interacts with the co-chaperonin GroES.

The protein localises to the cytoplasm. It catalyses the reaction ATP + H2O + a folded polypeptide = ADP + phosphate + an unfolded polypeptide.. In terms of biological role, together with its co-chaperonin GroES, plays an essential role in assisting protein folding. The GroEL-GroES system forms a nano-cage that allows encapsulation of the non-native substrate proteins and provides a physical environment optimized to promote and accelerate protein folding. The chain is Chaperonin GroEL from Levilactobacillus brevis (strain ATCC 367 / BCRC 12310 / CIP 105137 / JCM 1170 / LMG 11437 / NCIMB 947 / NCTC 947) (Lactobacillus brevis).